Consider the following 245-residue polypeptide: 1-(5-phosphoribosyl)-5-[(5-phosphoribosylamino)methylideneamino] imidazole-4-carboxamide isomerase (245 aa).

Catalysis depends on aspartate 8, which acts as the Proton acceptor. The active-site Proton donor is the aspartate 130.

The protein belongs to the HisA/HisF family.

Its subcellular location is the cytoplasm. The enzyme catalyses 1-(5-phospho-beta-D-ribosyl)-5-[(5-phospho-beta-D-ribosylamino)methylideneamino]imidazole-4-carboxamide = 5-[(5-phospho-1-deoxy-D-ribulos-1-ylimino)methylamino]-1-(5-phospho-beta-D-ribosyl)imidazole-4-carboxamide. The protein operates within amino-acid biosynthesis; L-histidine biosynthesis; L-histidine from 5-phospho-alpha-D-ribose 1-diphosphate: step 4/9. This is 1-(5-phosphoribosyl)-5-[(5-phosphoribosylamino)methylideneamino] imidazole-4-carboxamide isomerase from Pseudomonas fluorescens (strain ATCC BAA-477 / NRRL B-23932 / Pf-5).